The chain runs to 667 residues: DNA ligase (667 aa).

Residues 30 to 34 (DSEYD), 79 to 80 (SL), and Glu112 contribute to the NAD(+) site. Lys114 acts as the N6-AMP-lysine intermediate in catalysis. Residues Arg135, Glu172, Lys289, and Lys313 each coordinate NAD(+). Positions 407, 410, 425, and 431 each coordinate Zn(2+). Residues 590-667 (VRDNPLKGKT…SENEFLALLA (78 aa)) form the BRCT domain.

Belongs to the NAD-dependent DNA ligase family. LigA subfamily. Requires Mg(2+) as cofactor. Mn(2+) serves as cofactor.

The enzyme catalyses NAD(+) + (deoxyribonucleotide)n-3'-hydroxyl + 5'-phospho-(deoxyribonucleotide)m = (deoxyribonucleotide)n+m + AMP + beta-nicotinamide D-nucleotide.. DNA ligase that catalyzes the formation of phosphodiester linkages between 5'-phosphoryl and 3'-hydroxyl groups in double-stranded DNA using NAD as a coenzyme and as the energy source for the reaction. It is essential for DNA replication and repair of damaged DNA. This is DNA ligase from Histophilus somni (strain 2336) (Haemophilus somnus).